Consider the following 246-residue polypeptide: Probable transcriptional regulatory protein ASA_2843 (246 aa).

It belongs to the TACO1 family.

The protein localises to the cytoplasm. The chain is Probable transcriptional regulatory protein ASA_2843 from Aeromonas salmonicida (strain A449).